Here is a 191-residue protein sequence, read N- to C-terminus: uncharacterized protein (191 aa).

The next 4 membrane-spanning stretches (helical) occupy residues 12-32 (FAFL…FFTL), 48-68 (LVAL…LTLF), 92-112 (YISV…LLSL), and 168-188 (IFCL…SCAF).

It localises to the membrane. This is an uncharacterized protein from Saccharomyces cerevisiae (strain ATCC 204508 / S288c) (Baker's yeast).